Reading from the N-terminus, the 85-residue chain is Polcalcin Bet v 4 (85 aa).

EF-hand domains follow at residues 7-42 (QDKA…LGSI) and 42-77 (ITPD…NRGL). The Ca(2+) site is built by aspartate 20, asparagine 22, aspartate 24, lysine 26, glutamate 31, aspartate 55, aspartate 57, aspartate 59, and glutamate 66.

In terms of assembly, monomer.

The sequence is that of Polcalcin Bet v 4 (BETV4) from Betula pendula (European white birch).